Reading from the N-terminus, the 207-residue chain is Protein YABBY 6 (207 aa).

Residues 16–43 form a C4-type zinc finger; the sequence is CNFCNTILAVSVPGNSMLNIVTVRCGHC.

This sequence belongs to the YABBY family. As to expression, expressed in leaf blades, leaf sheaths and flowers.

It localises to the nucleus. The sequence is that of Protein YABBY 6 (YAB6) from Oryza sativa subsp. japonica (Rice).